A 219-amino-acid polypeptide reads, in one-letter code: MSRISKAEMSKLLSVYFIMGSNNCTKDPLQVLREALEGFITIFQFREKGEGALTGEERICFAKELQAICKEYGVPFIVNDDVELALELDADGVHVGQDDEGITSVREKMGDKIVGVSTHTIEEARWVIENGADYLGVGPIFPTSTKKDTKAVQGTKGLAHFREQGITIPIVGIGGISIENTASVIEAGADGVSVISAISLAESAYESTKKLVEEVSRSL.

4-amino-2-methyl-5-(diphosphooxymethyl)pyrimidine-binding positions include 44–48 (QFREK) and asparagine 79. Mg(2+) contacts are provided by aspartate 80 and aspartate 99. Residue serine 117 participates in 4-amino-2-methyl-5-(diphosphooxymethyl)pyrimidine binding. 143 to 145 (TST) serves as a coordination point for 2-[(2R,5Z)-2-carboxy-4-methylthiazol-5(2H)-ylidene]ethyl phosphate. Lysine 146 serves as a coordination point for 4-amino-2-methyl-5-(diphosphooxymethyl)pyrimidine. 2-[(2R,5Z)-2-carboxy-4-methylthiazol-5(2H)-ylidene]ethyl phosphate-binding positions include glycine 175 and 195–196 (IS).

It belongs to the thiamine-phosphate synthase family. Mg(2+) is required as a cofactor.

It carries out the reaction 2-[(2R,5Z)-2-carboxy-4-methylthiazol-5(2H)-ylidene]ethyl phosphate + 4-amino-2-methyl-5-(diphosphooxymethyl)pyrimidine + 2 H(+) = thiamine phosphate + CO2 + diphosphate. The catalysed reaction is 2-(2-carboxy-4-methylthiazol-5-yl)ethyl phosphate + 4-amino-2-methyl-5-(diphosphooxymethyl)pyrimidine + 2 H(+) = thiamine phosphate + CO2 + diphosphate. The enzyme catalyses 4-methyl-5-(2-phosphooxyethyl)-thiazole + 4-amino-2-methyl-5-(diphosphooxymethyl)pyrimidine + H(+) = thiamine phosphate + diphosphate. It functions in the pathway cofactor biosynthesis; thiamine diphosphate biosynthesis; thiamine phosphate from 4-amino-2-methyl-5-diphosphomethylpyrimidine and 4-methyl-5-(2-phosphoethyl)-thiazole: step 1/1. Functionally, condenses 4-methyl-5-(beta-hydroxyethyl)thiazole monophosphate (THZ-P) and 2-methyl-4-amino-5-hydroxymethyl pyrimidine pyrophosphate (HMP-PP) to form thiamine monophosphate (TMP). This chain is Thiamine-phosphate synthase, found in Bacillus anthracis (strain A0248).